The primary structure comprises 197 residues: Probable UbiX-like flavin prenyltransferase (197 aa).

FMN is bound by residues 9-11 (GAT), S36, 87-90 (SMKT), and R122.

It belongs to the UbiX/PAD1 family. YclB subfamily. As to quaternary structure, homododecamer.

It carries out the reaction dimethylallyl phosphate + FMNH2 = prenylated FMNH2 + phosphate. Functionally, flavin prenyltransferase that catalyzes the synthesis of the prenylated FMN cofactor (prenyl-FMN) for phenolic acid decarboxylase C. Involved in the decarboxylation and detoxification of phenolic derivatives under both aerobic and anaerobic conditions. The sequence is that of Probable UbiX-like flavin prenyltransferase (ecdB) from Escherichia coli.